A 101-amino-acid polypeptide reads, in one-letter code: Gamma-secretase subunit PEN-2 (101 aa).

The Cytoplasmic segment spans residues 1–17 (MNLERIPNEEKLSLCRR). Positions 18-36 (YYLGGFAFLPFLWLVNILW) form an intramembrane region, helical. Over 37–57 (FFKEAFLKPAYTEQPQIKSYV) the chain is Cytoplasmic. The helical transmembrane segment at 58–78 (KKSALGLLLWVAVLTTWITVF) threads the bilayer. The Lumenal portion of the chain corresponds to 79–101 (QHFRAQWGEVGDYLSFTIPLGTA).

It belongs to the PEN-2 family. The functional gamma-secretase complex is composed of at least four polypeptides: a presenilin homodimer (psen1 or psen2), nicastrin (ncstn), aph1 (aph1a or aph1b) and psenen.

It localises to the endoplasmic reticulum membrane. Its subcellular location is the golgi apparatus. The protein localises to the golgi stack membrane. The protein resides in the cell membrane. It is found in the membrane. In terms of biological role, essential subunit of the gamma-secretase complex, an endoprotease complex that catalyzes the intramembrane cleavage of integral membrane proteins such as Notch receptors and APP (amyloid-beta precursor protein). The gamma-secretase complex plays a role in Notch and Wnt signaling cascades and regulation of downstream processes via its role in processing key regulatory proteins. This is Gamma-secretase subunit PEN-2 (psenen) from Danio rerio (Zebrafish).